The primary structure comprises 673 residues: Inactive polyglycylase TTLL10 (673 aa).

The disordered stretch occupies residues 1 to 132; it reads MDHSCTRFIH…ADSDDTNAAG (132 aa). Residues 8-36 are compositionally biased toward basic residues; it reads FIHRRGPPTRTRAGFKRGKRPRIQQRPRA. Over residues 52–62 the composition is skewed to pro residues; the sequence is ASQPGPCPAPG. The span at 89–105 shows a compositional bias: basic and acidic residues; that stretch reads PDHDADGHCGPDLEGAE. Positions 155–552 constitute a TTL domain; sequence PGPFFYIGGS…TFRKSLRGQK (398 aa). ATP is bound by residues 362–365, K375, and D377; that span reads QRYI. The disordered stretch occupies residues 569–673; the sequence is EADPRPHLGG…EREEPENARP (105 aa). Pro residues predominate over residues 612–627; that stretch reads PAPPPLVPQRPRPPGP. Residues 661–673 show a composition bias toward basic and acidic residues; the sequence is AKEEREEPENARP.

Functionally, inactive polyglycylase. The polypeptide is Inactive polyglycylase TTLL10 (Homo sapiens (Human)).